Reading from the N-terminus, the 141-residue chain is MAHVLIVEARFYSHLNDMLLDGVRSALDAEGHSHETVTVPGALEVPAAIALAADSGRFDAYVALGVVIRGETYHFEVVSNESARGIMALTLDGLAIGNGILTVENEEQALARADKTRKDKGGEAAKAALAMLALKEQFGIG.

Residues Phe-11, 42–44, and 66–68 each bind 5-amino-6-(D-ribitylamino)uracil; these read ALE and VVI. Residue 71 to 72 coordinates (2S)-2-hydroxy-3-oxobutyl phosphate; it reads ET. His-74 (proton donor) is an active-site residue. Asn-98 is a 5-amino-6-(D-ribitylamino)uracil binding site. Position 112 (Arg-112) interacts with (2S)-2-hydroxy-3-oxobutyl phosphate.

Belongs to the DMRL synthase family.

The catalysed reaction is (2S)-2-hydroxy-3-oxobutyl phosphate + 5-amino-6-(D-ribitylamino)uracil = 6,7-dimethyl-8-(1-D-ribityl)lumazine + phosphate + 2 H2O + H(+). The protein operates within cofactor biosynthesis; riboflavin biosynthesis; riboflavin from 2-hydroxy-3-oxobutyl phosphate and 5-amino-6-(D-ribitylamino)uracil: step 1/2. Catalyzes the formation of 6,7-dimethyl-8-ribityllumazine by condensation of 5-amino-6-(D-ribitylamino)uracil with 3,4-dihydroxy-2-butanone 4-phosphate. This is the penultimate step in the biosynthesis of riboflavin. In Sphingopyxis alaskensis (strain DSM 13593 / LMG 18877 / RB2256) (Sphingomonas alaskensis), this protein is 6,7-dimethyl-8-ribityllumazine synthase.